We begin with the raw amino-acid sequence, 753 residues long: Fatty acid oxidation complex subunit alpha (753 aa).

Residues 8–197 form an enoyl-CoA hydratase region; it reads SVTHPAFTLN…KMGLVDDVVP (190 aa). The tract at residues 313 to 747 is 3-hydroxyacyl-CoA dehydrogenase; the sequence is RAIHRVGVLG…FYPVDANIDE (435 aa). A disordered region spans residues 593-622; the sequence is SNPTLHSNSTKNSSPTKNGNSPAKRNSFKW. Over residues 599–614 the composition is skewed to low complexity; it reads SNSTKNSSPTKNGNSP.

This sequence in the N-terminal section; belongs to the enoyl-CoA hydratase/isomerase family. In the central section; belongs to the 3-hydroxyacyl-CoA dehydrogenase family. In terms of assembly, heterotetramer of two alpha chains (FadJ) and two beta chains (FadI).

It localises to the cytoplasm. The catalysed reaction is a (3S)-3-hydroxyacyl-CoA = a (2E)-enoyl-CoA + H2O. It catalyses the reaction a 4-saturated-(3S)-3-hydroxyacyl-CoA = a (3E)-enoyl-CoA + H2O. The enzyme catalyses a (3S)-3-hydroxyacyl-CoA + NAD(+) = a 3-oxoacyl-CoA + NADH + H(+). It carries out the reaction (3S)-3-hydroxybutanoyl-CoA = (3R)-3-hydroxybutanoyl-CoA. It participates in lipid metabolism; fatty acid beta-oxidation. In terms of biological role, catalyzes the formation of a hydroxyacyl-CoA by addition of water on enoyl-CoA. Also exhibits 3-hydroxyacyl-CoA epimerase and 3-hydroxyacyl-CoA dehydrogenase activities. The protein is Fatty acid oxidation complex subunit alpha of Yersinia pseudotuberculosis serotype I (strain IP32953).